The following is a 595-amino-acid chain: Tyrosine-protein phosphatase cdcA (595 aa).

Positions 32 to 57 (TPFPYPAEQPKSPSKRRAQASPSKKR) are disordered. A compositionally biased stretch (basic residues) spans 44-57 (PSKRRAQASPSKKR). The 149-residue stretch at 233–381 (LPSTVSEVRS…QGSFREWWFE (149 aa)) folds into the Tyrosine-protein phosphatase domain. The active-site Phosphocysteine intermediate is the cysteine 322. The interval 392 to 595 (QPNPVTPGRS…GSPVRVKAQA (204 aa)) is disordered. The span at 449-461 (RKSHRKDSRHHPY) shows a compositional bias: basic residues. Residues 471-483 (VDKDTRKTRRSTD) show a composition bias toward basic and acidic residues. The span at 502-526 (SKSPAASPGQRSISYSATVTASYTL) shows a compositional bias: polar residues.

The protein belongs to the protein-tyrosine phosphatase family. Non-receptor class CDC14 subfamily.

Its subcellular location is the nucleus. The protein localises to the cytoplasm. It localises to the cell septum. The enzyme catalyses O-phospho-L-tyrosyl-[protein] + H2O = L-tyrosyl-[protein] + phosphate. Protein phosphatase which antagonizes mitotic cyclin-dependent kinase nimX, the inactivation of which is essential for exit from mitosis. To access its substrates, is released from nucleolar sequestration during mitosis. Plays an essential in coordinating the nuclear division cycle with cytokinesis through the cytokinesis checkpoint. Involved in chromosome segregation, where it is required for meiosis I spindle dissambly as well as for establishing two consecutive chromosome segregation phases. Required for the transcription of the two major endoglucanase genes eglA and eglB and growth on synthetic cellulose as the sole carbon source. In Emericella nidulans (strain FGSC A4 / ATCC 38163 / CBS 112.46 / NRRL 194 / M139) (Aspergillus nidulans), this protein is Tyrosine-protein phosphatase cdcA (cdcA).